Reading from the N-terminus, the 317-residue chain is Melanocyte-stimulating hormone receptor (317 aa).

The disordered stretch occupies residues 1–23 (MSGQGPQRRLLGSPNATSPTTPH). At 1 to 37 (MSGQGPQRRLLGSPNATSPTTPHFKLAANQTGPRCLE) the chain is on the extracellular side. N-linked (GlcNAc...) asparagine glycosylation is present at Asn29. Residues 38–63 (VSIPNGLFLSLGLVSVVENVLVVAAI) form a helical membrane-spanning segment. Topologically, residues 64 to 72 (AKNRNLHSP) are cytoplasmic. The chain crosses the membrane as a helical span at residues 73 to 93 (MYYFIGCLAVSDLLVSVTNVL). At 94-118 (ETAVMLLVEAGALAAQAAVVQQLDD) the chain is on the extracellular side. A helical transmembrane segment spans residues 119-140 (IIDVLICGSMVSSLCFLGAIAV). Over 141-163 (DRYLSIFYALRYHSIVTLPRAWR) the chain is Cytoplasmic. Residues 164–183 (AISAIWVASVLSSTLFIAYY) form a helical membrane-spanning segment. Residues 184–191 (NHTAVLLC) lie on the Extracellular side of the membrane. A helical transmembrane segment spans residues 192-211 (LVSFFVAMLVLMAVLYVHML). At 212–240 (ARARQHARGIARLRKRQHSVHQGFGLKGA) the chain is on the cytoplasmic side. Residues 241–266 (ATLTILLGIFFLCWGPFFLHLSLMVL) traverse the membrane as a helical segment. The Extracellular segment spans residues 267 to 279 (CPQHPICGCVFQN). Residues 280–300 (FNLFLTLIICNSIIDPFIYAF) form a helical membrane-spanning segment. At 301–317 (RSQELRKTLQEVVLCSW) the chain is on the cytoplasmic side. Cys315 carries the S-palmitoyl cysteine lipid modification.

The protein belongs to the G-protein coupled receptor 1 family. As to quaternary structure, interacts with MGRN1, but does not undergo MGRN1-mediated ubiquitination; this interaction competes with GNAS-binding and thus inhibits agonist-induced cAMP production. Interacts with OPN3; the interaction results in a decrease in MC1R-mediated cAMP signaling and ultimately a decrease in melanin production in melanocytes.

It localises to the cell membrane. Receptor for MSH (alpha, beta and gamma) and ACTH. The activity of this receptor is mediated by G proteins which activate adenylate cyclase. Mediates melanogenesis, the production of eumelanin (black/brown) and phaeomelanin (red/yellow), via regulation of cAMP signaling in melanocytes. In Vulpes vulpes (Red fox), this protein is Melanocyte-stimulating hormone receptor (MC1R).